The following is a 165-amino-acid chain: UPF0303 protein Bxeno_A1932 (165 aa).

Belongs to the UPF0303 family.

This Paraburkholderia xenovorans (strain LB400) protein is UPF0303 protein Bxeno_A1932.